Consider the following 427-residue polypeptide: Pseudouridylate synthase 1 homolog (427 aa).

A disordered region spans residues 20 to 83; the sequence is GPRPSCSPRM…DEERREKPPK (64 aa). Positions 44–79 are enriched in basic and acidic residues; that stretch reads QDRRSCSGRAGGDRVWEDGEHPAKKLKSGGDEERRE. D146 (nucleophile) is an active-site residue. Positions 407–427 are disordered; sequence GGTGAKVPSPLEGSEGDGDTD. S415 and S420 each carry phosphoserine. T426 carries the phosphothreonine modification.

It belongs to the tRNA pseudouridine synthase TruA family. As to quaternary structure, monomer. Forms a complex with RARG and the SRA1 RNA in the nucleus. In terms of tissue distribution, widely expressed. High levels of expression found in brain and skeletal muscle.

It localises to the mitochondrion. Its subcellular location is the nucleus. The protein resides in the cytoplasm. It carries out the reaction a uridine in tRNA = a pseudouridine in tRNA. The enzyme catalyses uridine(38/39/40) in tRNA = pseudouridine(38/39/40) in tRNA. The catalysed reaction is a uridine in mRNA = a pseudouridine in mRNA. Its function is as follows. Pseudouridylate synthase that catalyzes pseudouridylation of tRNAs and mRNAs. Acts on positions 27/28 in the anticodon stem and also positions 34 and 36 in the anticodon of an intron containing tRNA. Also catalyzes pseudouridylation of mRNAs: mediates pseudouridylation of mRNAs with the consensus sequence 5'-UGUAG-3'. Acts as a regulator of pre-mRNA splicing by mediating pseudouridylation of pre-mRNAs at locations associated with alternatively spliced regions. Pseudouridylation of pre-mRNAs near splice sites directly regulates mRNA splicing and mRNA 3'-end processing. Involved in regulation of nuclear receptor activity through pseudouridylation of SRA1 mRNA. This Homo sapiens (Human) protein is Pseudouridylate synthase 1 homolog.